The sequence spans 29 residues: Cytochrome b6-f complex subunit 8 (29 aa).

A helical transmembrane segment spans residues 3–23 (IVSLAWAALMVVFSFSLSLVV).

The protein belongs to the PetN family. In terms of assembly, the 4 large subunits of the cytochrome b6-f complex are cytochrome b6, subunit IV (17 kDa polypeptide, PetD), cytochrome f and the Rieske protein, while the 4 small subunits are PetG, PetL, PetM and PetN. The complex functions as a dimer.

Its subcellular location is the plastid. It is found in the chloroplast thylakoid membrane. Its function is as follows. Component of the cytochrome b6-f complex, which mediates electron transfer between photosystem II (PSII) and photosystem I (PSI), cyclic electron flow around PSI, and state transitions. The protein is Cytochrome b6-f complex subunit 8 of Glycine max (Soybean).